We begin with the raw amino-acid sequence, 885 residues long: Initiator protein NS1 (885 aa).

The interval 404-477 is disordered; the sequence is AEAGPSGTQP…GREDIFSGAP (74 aa). Positions 409–423 are enriched in polar residues; sequence SGTQPVETAQQSPPT. Positions 452 to 465 are enriched in gly residues; it reads QAAGGSEMGAGGSA.

It belongs to the parvoviruses initiator protein NS1 family. Homooligomer. Requires Mg(2+) as cofactor.

It is found in the host nucleus. It carries out the reaction ATP + H2O = ADP + phosphate + H(+). In terms of biological role, multifunctional protein which displays endonuclease and helicase activities required for initiating and directing viral DNA replication. Also plays a role in viral packaging and transactivation of several promoters. Binds site-specifically to 2-3 approximate tandem copies within the origins of replication (Ori), unwinds this hairpin region and nicks one DNA strand thereby initiating the rolling circle replication (RCR). The polypeptide is Initiator protein NS1 (Bombyx mori densovirus (BmDNV)).